The primary structure comprises 298 residues: Syntenin-1 (298 aa).

S2 is modified (N-acetylserine). The interval 2 to 60 is interaction with PDCD6IP; it reads SLYPSLEDLKVDKVIQAQTAFSANPANPAILSEASAPIPHDGNLYPRLYPELSQYMGLS. 3 consecutive short sequence motifs (LYPX(n)L motif) follow at residues 3 to 7, 45 to 49, and 49 to 53; these read LYPSL, LYPRL, and LYPEL. At S6 the chain carries Phosphoserine. Y46 is modified (phosphotyrosine). PDZ domains follow at residues 114-193 and 198-273; these read EVIL…IRDR and TITM…MPAF. Residues N215 and 250 to 251 each bind a 1,2-diacyl-sn-glycero-3-phospho-(1D-myo-inositol-4,5-bisphosphate); that span reads KD.

As to quaternary structure, monomer and homodimer. Interacts with SDC1, SDC2, SDC3, SDC4, NRXN2, EPHA7, EPHB1, NF2 isoform 1, TGFA and IL5RA. Interacts with NFASC and PTPRJ. Interacts with SDCBP2. Interacts with PDCD6IP. Forms a complex with PDCD6IP and SDC2. Interacts (via C-terminus) with TGFBR1. Binds to FZD7; this interaction is increased by inositol trisphosphate (IP3). Interacts with SMO. Post-translationally, phosphorylated on tyrosine residues. Expressed in lung cancers, including adenocarcinoma, squamous cell carcinoma and small-cell carcinoma (at protein level). Widely expressed. Expressed in fetal kidney, liver, lung and brain. In adult highest expression in heart and placenta.

It is found in the cell junction. It localises to the focal adhesion. Its subcellular location is the adherens junction. The protein resides in the cell membrane. The protein localises to the endoplasmic reticulum membrane. It is found in the nucleus. It localises to the melanosome. Its subcellular location is the cytoplasm. The protein resides in the cytosol. The protein localises to the cytoskeleton. It is found in the secreted. It localises to the extracellular exosome. Its subcellular location is the membrane raft. Its function is as follows. Multifunctional adapter protein involved in diverse array of functions including trafficking of transmembrane proteins, neuro and immunomodulation, exosome biogenesis, and tumorigenesis. Positively regulates TGFB1-mediated SMAD2/3 activation and TGFB1-induced epithelial-to-mesenchymal transition (EMT) and cell migration in various cell types. May increase TGFB1 signaling by enhancing cell-surface expression of TGFR1 by preventing the interaction between TGFR1 and CAV1 and subsequent CAV1-dependent internalization and degradation of TGFR1. In concert with SDC1/4 and PDCD6IP, regulates exosome biogenesis. Regulates migration, growth, proliferation, and cell cycle progression in a variety of cancer types. In adherens junctions may function to couple syndecans to cytoskeletal proteins or signaling components. Seems to couple transcription factor SOX4 to the IL-5 receptor (IL5RA). May also play a role in vesicular trafficking. Seems to be required for the targeting of TGFA to the cell surface in the early secretory pathway. In Homo sapiens (Human), this protein is Syntenin-1 (SDCBP).